We begin with the raw amino-acid sequence, 412 residues long: Adherens junction-associated protein 1 (412 aa).

Positions 1–43 (MWIQQLLGLSSMSIRWPGRSLGSHAWILIAMLQLAVDFPSCDS) are cleaved as a signal peptide. The Extracellular segment spans residues 44 to 284 (LGPGPEFRLL…GETSGLAVHQ (241 aa)). 2 disordered regions span residues 62 to 175 (LWSL…GRPT) and 243 to 271 (DPWKRTPVGVSTTEPSTSPSSNGKDIQPP). Residues 121 to 146 (PPAATRSSPSLASATASSSIVTAGAA) show a composition bias toward low complexity. Residues 160–171 (HDTEFNDFDFRG) are compositionally biased toward basic and acidic residues. A compositionally biased stretch (low complexity) spans 248-263 (TPVGVSTTEPSTSPSS). Residues 285–305 (IITITVSLIMVIAALITTLVL) traverse the membrane as a helical segment. A targeting signals region spans residues 305–412 (LKNCCAPSGH…VSEKWFEISC (108 aa)). The Cytoplasmic segment spans residues 306–412 (KNCCAPSGHT…VSEKWFEISC (107 aa)).

As to quaternary structure, forms a complex with CDH1 and CTNNB1; interacts directly with CTNNB1. Interacts with AP1M2 and isoform 2 of BSG/CD147.

It is found in the basolateral cell membrane. The protein localises to the apical cell membrane. Its subcellular location is the cell junction. It localises to the adherens junction. In terms of biological role, plays a role in cell adhesion and cell migration. The chain is Adherens junction-associated protein 1 (Ajap1) from Mus musculus (Mouse).